Reading from the N-terminus, the 143-residue chain is Large ribosomal subunit protein uL11 (143 aa).

This sequence belongs to the universal ribosomal protein uL11 family. In terms of assembly, part of the ribosomal stalk of the 50S ribosomal subunit. Interacts with L10 and the large rRNA to form the base of the stalk. L10 forms an elongated spine to which L12 dimers bind in a sequential fashion forming a multimeric L10(L12)X complex. Post-translationally, one or more lysine residues are methylated.

Forms part of the ribosomal stalk which helps the ribosome interact with GTP-bound translation factors. The sequence is that of Large ribosomal subunit protein uL11 from Borreliella afzelii (strain PKo) (Borrelia afzelii).